A 130-amino-acid polypeptide reads, in one-letter code: Small ribosomal subunit protein uS11c (130 aa).

The protein belongs to the universal ribosomal protein uS11 family. As to quaternary structure, part of the 30S ribosomal subunit.

Its subcellular location is the plastid. The protein localises to the chloroplast. In Chaetosphaeridium globosum (Charophycean green alga), this protein is Small ribosomal subunit protein uS11c.